The primary structure comprises 298 residues: 4-hydroxy-tetrahydrodipicolinate synthase (298 aa).

Residue T51 participates in pyruvate binding. Y139 serves as the catalytic Proton donor/acceptor. K167 (schiff-base intermediate with substrate) is an active-site residue. Pyruvate is bound at residue I209.

It belongs to the DapA family. In terms of assembly, homotetramer; dimer of dimers.

It localises to the cytoplasm. The enzyme catalyses L-aspartate 4-semialdehyde + pyruvate = (2S,4S)-4-hydroxy-2,3,4,5-tetrahydrodipicolinate + H2O + H(+). It functions in the pathway amino-acid biosynthesis; L-lysine biosynthesis via DAP pathway; (S)-tetrahydrodipicolinate from L-aspartate: step 3/4. In terms of biological role, catalyzes the condensation of (S)-aspartate-beta-semialdehyde [(S)-ASA] and pyruvate to 4-hydroxy-tetrahydrodipicolinate (HTPA). This chain is 4-hydroxy-tetrahydrodipicolinate synthase, found in Haemophilus influenzae (strain ATCC 51907 / DSM 11121 / KW20 / Rd).